We begin with the raw amino-acid sequence, 295 residues long: Virginiamycin B lyase (295 aa).

Histidine 227 is a binding site for substrate. Residue glutamate 267 coordinates Mg(2+). Histidine 269 serves as the catalytic Proton acceptor. Residue glutamate 284 participates in Mg(2+) binding.

Belongs to the Vgb family. As to quaternary structure, monomer. Requires Mg(2+) as cofactor.

Inactivates the type B streptogramin antibiotics by linearizing the lactone ring at the ester linkage, generating a free phenylglycine carboxylate and converting the threonyl moiety into 2-amino-butenoic acid. This Bacillus licheniformis (strain ATCC 14580 / DSM 13 / JCM 2505 / CCUG 7422 / NBRC 12200 / NCIMB 9375 / NCTC 10341 / NRRL NRS-1264 / Gibson 46) protein is Virginiamycin B lyase.